A 102-amino-acid chain; its full sequence is Small ribosomal subunit protein uS14 (102 aa).

This sequence belongs to the universal ribosomal protein uS14 family. As to quaternary structure, part of the 30S ribosomal subunit. Contacts proteins S3 and S10.

Binds 16S rRNA, required for the assembly of 30S particles and may also be responsible for determining the conformation of the 16S rRNA at the A site. This chain is Small ribosomal subunit protein uS14, found in Dichelobacter nodosus (strain VCS1703A).